The sequence spans 42 residues: Photosystem I reaction center subunit IX (42 aa).

A helical membrane pass occupies residues 7-27; it reads YLSTAPVLATLWFGFLAGLLI.

This sequence belongs to the PsaJ family.

The protein resides in the plastid. It is found in the chloroplast thylakoid membrane. Functionally, may help in the organization of the PsaE and PsaF subunits. This is Photosystem I reaction center subunit IX from Huperzia lucidula (Shining clubmoss).